The primary structure comprises 430 residues: Uric acid permease PucK (430 aa).

The next 14 helical transmembrane spans lie at 18–38, 43–63, 67–87, 97–117, 122–142, 163–183, 185–205, 209–229, 233–253, 274–294, 310–330, 333–353, 369–389, and 398–418; these read MLAM…AIGL, LTYL…LQLW, YFGI…GPMI, AIYG…GFFG, FFPP…LIPT, LLGF…KGFI, SIAI…MGKV, EVLE…PPTF, AVVT…GVYF, AEGL…TAFS, VIAI…AAAL, VIPT…VISY, LLII…PALF, and VLAG…HAFF.

It belongs to the nucleobase:cation symporter-2 (NCS2) (TC 2.A.40) family.

It is found in the cell membrane. Functionally, uptake of uric acid. In Bacillus subtilis (strain 168), this protein is Uric acid permease PucK (pucK).